The chain runs to 401 residues: LysM domain-containing GPI-anchored protein LYP4 (401 aa).

The signal sequence occupies residues 1 to 23; sequence MPPPLLLLLLLAAAAAAVAPARS. 4 cysteine pairs are disulfide-bonded: C30-C96, C36-C162, C94-C160, and C96-C162. 2 LysM domains span residues 106-156 and 175-218; these read VRYV…TLFV and LTYV…IIVV. 2 disulfides stabilise this stretch: C223–C255 and C250–C279. N-linked (GlcNAc...) asparagine glycosylation is present at N240. N-linked (GlcNAc...) asparagine glycans are attached at residues N281, N288, and N310. The GPI-anchor amidated serine moiety is linked to residue S373. The propeptide at 374-401 is removed in mature form; sequence SGPPPAGRHVVGDVLGAFALCLVGNLLW.

Interacts with LYP6. Interacts with CEBIP. Interacts with CERK1. As to expression, expressed in roots and leaves.

Its subcellular location is the cell membrane. Functionally, functions in innate immunity. Functions as a pattern recognition receptor (PRR), sensing bacterial peptidoglycan (PGN) and fungal chitin at the cell surface. Involved in resistance against the bacterial pathogen Xanthomonas oryzae pv. oryzae (Xoo) and the fungal pathogen Magnaporthe oryzae. Binds PGN and fungal chitin in vitro. Involved in microbe-associated molecular patterns (MAMPs) perception and participates in the activation of defense genes against the bacterial pathogen Xanthomonas oryzae pv. oryzicola (Xoc) or the fungal pathogen Magnaporthe oryzae. The polypeptide is LysM domain-containing GPI-anchored protein LYP4 (Oryza sativa subsp. japonica (Rice)).